The following is a 378-amino-acid chain: Squalene methyltransferase 1 (378 aa).

A helical transmembrane segment spans residues 17–37; that stretch reads LLTWKGVAGLVVAITLGYLII.

The protein belongs to the class I-like SAM-binding methyltransferase superfamily. Erg6/SMT family.

The protein resides in the microsome membrane. The catalysed reaction is squalene + 2 S-adenosyl-L-methionine = 3,22-dimethyl-1,2,23,24-tetradehydro-2,3,22,23-tetrahydrosqualene + 2 S-adenosyl-L-homocysteine + 2 H(+). Its function is as follows. Converts squalene to mono- and dimethyl derivatives, but not to tri- and tetramethylated products. Unable to methylate cycloartenol, zymosterol or lanosterol. Methylates both C-3 and C22 positions, but only C-3 position in monomethylated products. Produces mainly dimethylated squalene. In Botryococcus braunii (Green alga), this protein is Squalene methyltransferase 1 (TMT-1).